We begin with the raw amino-acid sequence, 281 residues long: UPF0294 protein VC_2238 (281 aa).

The protein belongs to the UPF0294 family.

The protein resides in the cytoplasm. The chain is UPF0294 protein VC_2238 from Vibrio cholerae serotype O1 (strain ATCC 39315 / El Tor Inaba N16961).